A 369-amino-acid polypeptide reads, in one-letter code: Anhydro-N-acetylmuramic acid kinase (369 aa).

Residue 12-19 (GTSLDGVD) coordinates ATP.

This sequence belongs to the anhydro-N-acetylmuramic acid kinase family.

The enzyme catalyses 1,6-anhydro-N-acetyl-beta-muramate + ATP + H2O = N-acetyl-D-muramate 6-phosphate + ADP + H(+). The protein operates within amino-sugar metabolism; 1,6-anhydro-N-acetylmuramate degradation. It participates in cell wall biogenesis; peptidoglycan recycling. In terms of biological role, catalyzes the specific phosphorylation of 1,6-anhydro-N-acetylmuramic acid (anhMurNAc) with the simultaneous cleavage of the 1,6-anhydro ring, generating MurNAc-6-P. Is required for the utilization of anhMurNAc either imported from the medium or derived from its own cell wall murein, and thus plays a role in cell wall recycling. The chain is Anhydro-N-acetylmuramic acid kinase from Shigella boydii serotype 4 (strain Sb227).